We begin with the raw amino-acid sequence, 1150 residues long: ATP-dependent helicase/deoxyribonuclease subunit B (1150 aa).

G8–S15 is a binding site for ATP. Residues C786, C1106, C1109, and C1115 each contribute to the [4Fe-4S] cluster site.

Belongs to the helicase family. AddB/RexB type 1 subfamily. Heterodimer of AddA and AddB. It depends on Mg(2+) as a cofactor. The cofactor is [4Fe-4S] cluster.

Its function is as follows. The heterodimer acts as both an ATP-dependent DNA helicase and an ATP-dependent, dual-direction single-stranded exonuclease. Recognizes the chi site generating a DNA molecule suitable for the initiation of homologous recombination. The AddB subunit has 5' -&gt; 3' nuclease activity but not helicase activity. The polypeptide is ATP-dependent helicase/deoxyribonuclease subunit B (Clostridium botulinum (strain Langeland / NCTC 10281 / Type F)).